The sequence spans 188 residues: RxLR effector protein Avh241 (188 aa).

A signal peptide spans 1 to 16 (MRQYCLLLIVLALAAA). The RxLR-dEER signature appears at 43 to 58 (RLLRSEPQDEDTFEDR). Positions 73-78 (GAAKAK) match the Host plasma membrane localization motif motif.

Belongs to the RxLR effector family.

It localises to the secreted. The protein localises to the host cell membrane. Functionally, effector that triggers cell death in a variety of plant species (including tobacco, tomato and soybean), regardless of the Rps genes present. Avh241 interacts with the plant immune system via at least two different mechanisms, one recognized by plants dependent on subcellular localization and one promoting infection independent on membrane localization. The cell death triggered by Avh241 in N.benthamiana requires the two host mitogen-activated protein kinases, MEK2 and WIPK. The sequence is that of RxLR effector protein Avh241 from Phytophthora sojae (strain P6497) (Soybean stem and root rot agent).